Consider the following 583-residue polypeptide: Kelch-like protein 35 (583 aa).

One can recognise a BTB domain in the interval 41–119 (TDVVLRAGGR…VYGAGVRLRA (79 aa)). Residues 146-248 (LEGRLRAANS…LEHVRLPLLA (103 aa)) enclose the BACK domain. Kelch repeat units lie at residues 301–350 (VIVV…ALRN), 352–394 (VYVS…VVQG), 395–441 (QLFA…SCAG), 443–489 (LFVI…SLED), 490–531 (TIYV…VCDG), and 533–579 (VHIL…TIIQ).

The protein is Kelch-like protein 35 (KLHL35) of Homo sapiens (Human).